The sequence spans 679 residues: NADPH--cytochrome P450 reductase (679 aa).

Residues 1-21 (MASEQTIDGAAAIPSGGGDEP) are Lumenal-facing. The chain crosses the membrane as a helical span at residues 22-42 (FLGLLDVALLAVLIGGAAFYF). At 43-679 (LRSRKKEEEP…QKRYSADVWS (637 aa)) the chain is on the cytoplasmic side. Residues 84 to 228 (LVVFYGSQTG…DFITWKDRFW (145 aa)) form the Flavodoxin-like domain. FMN contacts are provided by residues 90–95 (SQTGTG), 142–145 (ATYG), 177–186 (LGNKTYEHYN), and Asp-212. Residues 283–523 (KNPFLAPIKV…FIRKSQFRLP (241 aa)) enclose the FAD-binding FR-type domain. Arg-302 contributes to the NADP(+) binding site. FAD contacts are provided by residues 458-461 (RYYS), 476-478 (TAV), Tyr-482, and 492-495 (GVAT). NADP(+)-binding positions include Thr-537, 597 to 598 (SR), 603 to 607 (KVYVQ), and Asp-640. Trp-678 is a binding site for FAD.

The protein belongs to the NADPH--cytochrome P450 reductase family. In the N-terminal section; belongs to the flavodoxin family. It in the C-terminal section; belongs to the flavoprotein pyridine nucleotide cytochrome reductase family. In terms of assembly, interacts with sturkopf. The cofactor is FAD. Requires FMN as cofactor. In terms of tissue distribution, high in antennae.

The protein resides in the endoplasmic reticulum membrane. The enzyme catalyses 2 oxidized [cytochrome P450] + NADPH = 2 reduced [cytochrome P450] + NADP(+) + H(+). In terms of biological role, this enzyme is required for electron transfer from NADP to cytochrome p450 in microsomes. It can also provide electron transfer to heme oxygenase and cytochrome b5. May function to clear the olfactory organ (antennae) from accumulating chemicals. The polypeptide is NADPH--cytochrome P450 reductase (Cpr) (Drosophila melanogaster (Fruit fly)).